The primary structure comprises 136 residues: MTTPCPCGRTSANSAKPAKTQPLPFFACCGPYLNESVPAPDAHALMRSRYSAFVLQRADYLLATWHASTRPAALDFAPGAKWLGLDVRSHRVLDADHAEVEFVARCREAGRATRLHERSRFVRESERWFYVDGDQF.

The protein belongs to the UPF0225 family.

The protein is UPF0225 protein Pnap_0466 of Polaromonas naphthalenivorans (strain CJ2).